The primary structure comprises 303 residues: N-acetyl-D-glucosamine kinase (303 aa).

Residues 4–11 (GFDIGGTK) and 133–140 (GVGGGLVL) each bind ATP. The Zn(2+) site is built by histidine 157, cysteine 177, cysteine 179, and cysteine 184.

It belongs to the ROK (NagC/XylR) family. NagK subfamily.

The catalysed reaction is N-acetyl-D-glucosamine + ATP = N-acetyl-D-glucosamine 6-phosphate + ADP + H(+). The protein operates within cell wall biogenesis; peptidoglycan recycling. Functionally, catalyzes the phosphorylation of N-acetyl-D-glucosamine (GlcNAc) derived from cell-wall degradation, yielding GlcNAc-6-P. In Salmonella newport (strain SL254), this protein is N-acetyl-D-glucosamine kinase.